A 307-amino-acid polypeptide reads, in one-letter code: Recombination-associated protein RdgC (307 aa).

It belongs to the RdgC family.

It localises to the cytoplasm. The protein resides in the nucleoid. Functionally, may be involved in recombination. This chain is Recombination-associated protein RdgC, found in Burkholderia cenocepacia (strain ATCC BAA-245 / DSM 16553 / LMG 16656 / NCTC 13227 / J2315 / CF5610) (Burkholderia cepacia (strain J2315)).